A 182-amino-acid polypeptide reads, in one-letter code: UPF0301 protein CHU_1773 (182 aa).

This sequence belongs to the UPF0301 (AlgH) family.

The sequence is that of UPF0301 protein CHU_1773 from Cytophaga hutchinsonii (strain ATCC 33406 / DSM 1761 / CIP 103989 / NBRC 15051 / NCIMB 9469 / D465).